Here is a 593-residue protein sequence, read N- to C-terminus: UvrABC system protein C (593 aa).

The GIY-YIG domain occupies 17–94; the sequence is MEPGCYLMKD…IKQYQPRYNI (78 aa). The 36-residue stretch at 199-234 folds into the UVR domain; sequence KTILKSLEERMLTASESLDFERAKEYRDLIQHIQNL.

This sequence belongs to the UvrC family. As to quaternary structure, interacts with UvrB in an incision complex.

It is found in the cytoplasm. The UvrABC repair system catalyzes the recognition and processing of DNA lesions. UvrC both incises the 5' and 3' sides of the lesion. The N-terminal half is responsible for the 3' incision and the C-terminal half is responsible for the 5' incision. The chain is UvrABC system protein C from Staphylococcus aureus (strain USA300).